We begin with the raw amino-acid sequence, 274 residues long: Glycerol uptake facilitator protein (274 aa).

2 helical membrane-spanning segments follow: residues 3 to 23 (AFWGEVIGTMLLIIFGAGVCA) and 38 to 58 (IVVVFGWGLGVAMAAYAVGGI). The short motif at 64–66 (NPA) is the NPA 1 element. A run of 3 helical transmembrane segments spans residues 82-102 (VPVYIAAQMIGAIIGAVIIYL), 131-151 (FANVLSEVIGTFVLVLGILAI), and 164-184 (IVGFLIVAIGISLGGTTGYAI). An NPA 2 motif is present at residues 185 to 187 (NPA). Residues 238 to 258 (ITSSFWIVSVILVVVLLGLYV) form a helical membrane-spanning segment.

This sequence belongs to the MIP/aquaporin (TC 1.A.8) family.

It is found in the cell membrane. It carries out the reaction glycerol(in) = glycerol(out). In terms of biological role, mediates glycerol diffusion across the cytoplasmic membrane via a pore-type mechanism. This Bacillus subtilis (strain 168) protein is Glycerol uptake facilitator protein (glpF).